A 649-amino-acid polypeptide reads, in one-letter code: Serine/threonine kinase-like domain-containing protein STKLD1 (649 aa).

Positions 1-13 (MLGPESDGRRPTQ) are enriched in basic and acidic residues. The interval 1–23 (MLGPESDGRRPTQGERGPGYPGE) is disordered. In terms of domain architecture, Protein kinase spans 28–379 (YQVLYQLNPG…CNQAITSAVL (352 aa)). Residues 34–42 (LNPGALGVN) and lysine 57 contribute to the ATP site. Residues 621-640 (FSKPGLPPGGSPQPGCTASG) are disordered.

The protein belongs to the protein kinase superfamily. Ser/Thr protein kinase family. STKL subfamily.

The chain is Serine/threonine kinase-like domain-containing protein STKLD1 (STKLD1) from Macaca fascicularis (Crab-eating macaque).